Reading from the N-terminus, the 505-residue chain is Trans-cinnamate 4-monooxygenase (505 aa).

The chain crosses the membrane as a helical span at residues 3–23 (LLLLEKTLLGLFAAIIVASIV). Residues 213 to 218 (RSRLAQ) and Ala306 each bind (E)-cinnamate. Residue Cys447 coordinates heme.

It belongs to the cytochrome P450 family. The cofactor is heme.

The protein localises to the membrane. It carries out the reaction (E)-cinnamate + reduced [NADPH--hemoprotein reductase] + O2 = (E)-4-coumarate + oxidized [NADPH--hemoprotein reductase] + H2O + H(+). The protein operates within phenylpropanoid metabolism; trans-4-coumarate biosynthesis; trans-4-coumarate from trans-cinnamate: step 1/1. Its function is as follows. Catalyzes the first oxidative step of the phenylpropanoid pathway in higher plants by transforming trans-cinnamate into p-coumarate. The compounds formed by this pathway are essential components for lignification, pollination, and defense against ultraviolet light, predators and pathogens. This Catharanthus roseus (Madagascar periwinkle) protein is Trans-cinnamate 4-monooxygenase (CYP73A4).